The chain runs to 377 residues: Mitochondrial pyrimidine nucleotide transporter RIM2 (377 aa).

Solcar repeat units follow at residues 50-163, 173-262, and 286-375; these read VKPW…TKDM, ETPM…MKRL, and KEWC…VIRL. 6 consecutive transmembrane segments (helical) span residues 53 to 73, 131 to 151, 179 to 199, 238 to 258, 286 to 306, and 347 to 368; these read WVHFVAGGIGGMAGAVVTCPF, GFRSLFKGLGPNLVGVIPARS, LMAAATAGWATATATNPIWLI, GLSASYLGSVEGILQWLLYEQ, KEWCQRSGSAGLAKFVASIAT, and MYSGLTPHLMRTVPNSIIMFGT.

The protein belongs to the mitochondrial carrier (TC 2.A.29) family.

It localises to the mitochondrion inner membrane. It carries out the reaction 5-methyl-UTP(out) + UTP(in) = 5-methyl-UTP(in) + UTP(out). Mitochondrial transporter that imports/exports pyrimidine nucleotides into and from mitochondria. Selectively transports uridine, thymidine, and cytosine (deoxy)nucleoside di- and triphosphates by an antiport mechanism. Also transports, with lower efficiency, uridine, thymidine, and cytosine (deoxy)nucleoside monophosphates as well as guanosine (deoxy)nucleoside di- and triphosphate. May import (deoxy)nucleoside triphosphates in exchange for intramitochondrial (deoxy)nucleoside monophosphates, thus providing precursors necessary for de novo synthesis of mitochondrial DNA and RNA while exporting products of their catabolism. Mediates the transport of iron and other divalent metal ions like copper and zinc across the mitochondrial inner membrane in a pyrimidine nucleotide-dependent fashion. Catalyzes the co-import of pyrimidine nucleotides and divalent metal ions including ferrous iron. Participates in mitochondrial genome maintenance, regulation of mitochondrial membrane potential and mitochondrial respiration. The polypeptide is Mitochondrial pyrimidine nucleotide transporter RIM2 (RIM2) (Saccharomyces cerevisiae (strain ATCC 204508 / S288c) (Baker's yeast)).